Reading from the N-terminus, the 572-residue chain is Probable serine/threonine-protein kinase At1g54610 (572 aa).

The interval 1–89 (MGCVFGREAA…SNPSKHWRGE (89 aa)) is disordered. The segment covering 9–40 (AATTTTAEAKQAKSSKASSGVVVVGESSVTKS) has biased composition (low complexity). Residues 47 to 67 (DVEKKKNEEANGDKERKSSKG) show a composition bias toward basic and acidic residues. Residues 74 to 83 (KPNPRLSNPS) are compositionally biased toward polar residues. A Protein kinase domain is found at 118 to 402 (FEKIDKIGQG…ASAALKSEFF (285 aa)). Residues 124–132 (IGQGTYSNV) and Lys147 each bind ATP. Residue Asp242 is the Proton acceptor of the active site. Disordered regions lie at residues 409–474 (CEPA…NVDR) and 526–572 (SSFN…AVVA). The segment covering 419–434 (PSKEIDAKRRDEETRR) has biased composition (basic and acidic residues). Positions 554–572 (SRKKKDNTKSSKGKRAVVA) are enriched in basic residues.

This sequence belongs to the protein kinase superfamily. Ser/Thr protein kinase family.

The enzyme catalyses L-seryl-[protein] + ATP = O-phospho-L-seryl-[protein] + ADP + H(+). It catalyses the reaction L-threonyl-[protein] + ATP = O-phospho-L-threonyl-[protein] + ADP + H(+). The polypeptide is Probable serine/threonine-protein kinase At1g54610 (Arabidopsis thaliana (Mouse-ear cress)).